The chain runs to 283 residues: Elongation factor Ts (283 aa).

An involved in Mg(2+) ion dislocation from EF-Tu region spans residues 80-83 (TDFV).

Belongs to the EF-Ts family.

It localises to the cytoplasm. Its function is as follows. Associates with the EF-Tu.GDP complex and induces the exchange of GDP to GTP. It remains bound to the aminoacyl-tRNA.EF-Tu.GTP complex up to the GTP hydrolysis stage on the ribosome. This Salmonella paratyphi A (strain ATCC 9150 / SARB42) protein is Elongation factor Ts.